A 183-amino-acid polypeptide reads, in one-letter code: Holliday junction branch migration complex subunit RuvA (183 aa).

The segment at 1 to 64 (MVVGIEGIIT…EDSNKFYGFL (64 aa)) is domain I. Residues 65–139 (DKDEQKMFEM…DTKTKLENVS (75 aa)) form a domain II region. Position 139 (serine 139) is a region of interest, flexible linker. The segment at 139-183 (SDDKSEALAALLTLGFKQEKIISVLASAQATGTSELIKEALKKLG) is domain III.

It belongs to the RuvA family. As to quaternary structure, homotetramer. Forms an RuvA(8)-RuvB(12)-Holliday junction (HJ) complex. HJ DNA is sandwiched between 2 RuvA tetramers; dsDNA enters through RuvA and exits via RuvB. An RuvB hexamer assembles on each DNA strand where it exits the tetramer. Each RuvB hexamer is contacted by two RuvA subunits (via domain III) on 2 adjacent RuvB subunits; this complex drives branch migration. In the full resolvosome a probable DNA-RuvA(4)-RuvB(12)-RuvC(2) complex forms which resolves the HJ.

Its subcellular location is the cytoplasm. The RuvA-RuvB-RuvC complex processes Holliday junction (HJ) DNA during genetic recombination and DNA repair, while the RuvA-RuvB complex plays an important role in the rescue of blocked DNA replication forks via replication fork reversal (RFR). RuvA specifically binds to HJ cruciform DNA, conferring on it an open structure. The RuvB hexamer acts as an ATP-dependent pump, pulling dsDNA into and through the RuvAB complex. HJ branch migration allows RuvC to scan DNA until it finds its consensus sequence, where it cleaves and resolves the cruciform DNA. This chain is Holliday junction branch migration complex subunit RuvA, found in Campylobacter jejuni subsp. jejuni serotype O:23/36 (strain 81-176).